Reading from the N-terminus, the 3649-residue chain is MTSARHLKSAADWCARIDAIAGQRCDLEMLLKDEWRHRVAVRDSDTAVRATQEKELTISGQDYTALKQALGAMPLEAFALATLHSVLHAYGHGHQTVVAFLRDGKVLPVVVDHLEQAGLTCAEAAEQLEDAVAREDMYLPPEELLQRGLFDALLVLADGHLGFTELPPAPLVTIVRDDPAAGCLHWRIAYAGEFFEDKIIAGVLDVAREVLGQFIGRPEQLVADIDLVSAEQELQLHQWNGTDGEFDEDKRLNELFEDVVRRAPDREAVVCGDVRLTYREVNERANQFAHWLIQGPVRVRPGALIGLYLDKSDLGVVATFGIWKSGAAYVPIDPAYPAERIRFLVGDTGLSGIVTNRRHAERLREVLGDEHASVHVIEVEAVVAGPHPEQARENPGLALSSRDRAYVTYTSGTTGVPKGVPKYHYSVVNSITDLSERYDMRRPGTERVALFASYVFEPHLRQTLIALINEQTLVIVPDDVRLDPDLFPEYIERHGVTYLNATGSVLQHFDLRRCASLKRLLLVGEELTASGLRQLREKFAGRVVNEYAFTEAAFVTAVKEFGPGVTERRDRSIGRPLRNVKWYVLSQGLKQLPIGAIGELYIGGCGVAPGYLNRDDLTAERFTANPFQTEEEKARGRNGRLYRTGDLARVLLNGEVEFMGRADFQLKLNGVRVEPGEIEAQATEFPGVKKCVVVAKENATGDRHLVGYYLVEDGAEVAEADLIAFLEQRLIRIMVPARMVRLTSIPVNVNGKVDWRALPDVSLHPAPANAMNGALLAIDGSNAPLLAITEQLRAIWSEVLGVPQNRIGERDDFFRLGGQSISCILLIARVRQRLSLSLGVEDVFALRTLDALAGHLESQGHAEPEVVAEEVTTGSEPVRVLANGLQQGLLYHHLKTAGGDDAYVVQSVHRYHAPIRPELMKDAWQAARQTYPALRLRFDWAEEPVQIVDNDDKPFDWRFVDLSATADDAEQEARVRELQERDRTEPYDLAGGRLFRVYLIKQREDLFSLIFSCHHIILDGWSLPVLHDEVHRNYLALRAGQPIESDVDNAYVAAQRYWEAHRNDHAAYWVEQLGRIDERGDFAGLLNEKSRYRVSLGDYDHVQRHRTRKLYLGADLTGALKAGCAADQVTLHSVLQFVWHKVLHAIGGGNTTVVGTIVSGRNLPVDGIENSAGLFINTLPLIVDHDQQAGQNVAEAVRDIQAAVNTMNSKSIVELGRLQSGEMKRRLFDTLLVLENYPRLLDEEEELAHQEALRFEKAYDADKVDYPIAVVAREEGDELTVTLWYAGELFDEDTIDTLLDVARTLFRQVTEDIARPVRELDLISPSMRARFDSWNETAEEFPADKTLHAVFEEMAERWPDEIAVVYRENRLTYRELNERANRLAHYLRSVVELRPDDLVALVLDKSELMITAIIAAWKTGAAYVPIDSGYPDDRISFMLSDTAARVVVTNEIHSDRLRSLAETGTPVLEIELLHLDDQPAVNPVTETTSTDLAYAIYTSGTTGKPKAVLVEHRGVVNLQVSLAKLFGLDKAHRDEALLSFSNYIFDHFVEQMTDALLNGQKLVVLDDSMRTDPGRLCRYMNDEQVTYLSGTPSVLSLYDYSSATSLTRIDAIGEDFTEPVFAKIRGTFPGLIINGYGPTEISITSHKRPYPPDVHRVNKSIGFPVANTKCHVLNKAMKPVPVGGIGELYIGGIGVTRGYLNREDLTADRFVENPFQTAEERRLGENGRLYKTGDLVRWLPNGEVEYLGRTDLQVKIRGQRVELGEVEAALSSYPGVVRSLVVAREHAVGQKYLVGFYVGEQEFDEQDLKQWMRKKLPESVVPARVLRITDIPVTPSGKLDARRLPETDFGAGEGAEYVAPVSEFELKLCGIWAQVLEIAPDRIGVHDDFFALGGDSIRAMALAQAITTGFGQGLGVATVLQHTTLAAQAEHIQAAALEHTAWTPPPTAVEHPPVSLAQERLLFIDDFEGGTAAYNIPFVLRLPAHTRAALPGALGTLVRRHPALRTLLKTDDQGVRRQYPIPADDVRLEVPSTTVDSRAELDEVLTERAGYVFRLHEELPIRAEAFDHGDEIYLSVVVHHSCFDGWSWDIFRRELAALLDGVPEADLGALRGTYGEFAVWQRQYLTGKRLAALTEFWTGALGGFETIALPLDHPRPPRFDYRGRELEFELDERTTEALRELARTARVSLYSVLLGAWCLMLNMYTGQHDLVVGTPSANRGRPEFDRAVGFFANLLALRVRVDPAATLPAYVRSVGEAVVAAQVHGELPFEQLVKELKVEKDPSRHPILQLNFTLQNVSDHTSALTGYQPDSGGWTTTKFDLSATMTETATGLAGNLTYAASLFDDTSASGFIATFKHVLAEFASAAAQTPIAQLTALDEPGQAALPDATRRARRPGGPGRCTRLFEEVAATWPDRVAVVHGDVRLTYRELNERANRLAHHLRSVAEPRADELIALVLDKSELTLVAILAVWKAGAAYMPIDPSYPDDRIAFMLSDTGAKLVLAGEAHGSRVRGLTSGDVLDLEQLDLTGEPAENPVTETTSTELAYAIYTSGTTGKPKAVLVSHGSVDSFRAQLSGRYFGSPDESAEAVLFLANYVFDFSVEQLALSVLGGHKLLVPPPSAADDPAFYELANREGLSYLSGTPTQVERFDLARLSHLRCVLVAGEAFQPQHFEKMRGEFAGPILNAYGTTETTVYNTVHRFEPGDAYRNTLGAPLGNTRLYVLGDGMKLLPTGAVGELYLAGDCVTEGYLHRPELTRERFLPNPFAAESGRFPMIYRTGDVVRRGPDGELQYLGRNDAQVKINGLRIEPGEVEAALAGCSGVRQCAVVAGADPQAPERKRLVGYYLPEPGAAVDEADLFAALRAQLMPSMVPSLLVRLDRPLPMTITGKLDVDALPSADFSPKRAAYAAPRDRVEARLCHLWSAQLPGGTVGIDDDFFRCGGDSISALHLASQVQREIERKVSVKYLFDHPTVRSFVDNVLSGLAESSGDDEPEQGRLTGECPMLPIQEWFFAKPLADRHRWNHNFAIRTPPLDPGELRTALDRLVEHHDAFRLRFPESGGEVYAEDAAPITLHELDVRGLADADLRQRLVDWQRTFDLANGPTACAAYLHGFDDGTARVWFALHHLVVDTVSWHILAQDLEILYNGGDLGAKTGSYRQWAQAVRDYTPAEGEREFWAETTRDMESAELLAQTEGTTRRREEFALTAPDTRTLLAESPWAYDTEVNDLLLTATGFALRSITRQATNHLTVEGHGRELFEGAPDVRDTVGWFTTMHPFAVEVDPGDLGRSVLATRANRRRVPHHGIGYGALFGGEAPLPAVSFNYLGRLGEGDGQPTEAWQLDPALSGSHTVDGNRLANRSSIDVTMSCTGGRLVAVVDSLLGEAATRLFASELKVWLERLVSHTATVARNEPAREATTELFDPYILVNEDAERTLFVLPPGEGGAESYLSNLARQLPDLRLVLFNNVHLHTPMGSFEELGRYYVEHIRRLQPSGPYHLLGWSFGGVLSLEISRQLARAGERIDDLLLIDPYFGMRQASANIGLPGVEDILDPINYHYRPDEADLARLAGRLGNLVLFKAGEPNDVVNGPHQPRLFEYYHGTRFNHLDLLLPAAAIEVCDLAGETHHSWVRNEKLVRLMCERISTSLGSD.

Residues 401-861 (SRDRAYVTYT…LAGHLESQGH (461 aa)) are domain 1 (adipate-activating). Carrier domains lie at 783–860 (APLL…ESQG), 1859–1936 (APVS…QAAA), and 2909–2984 (APRD…LSGL). Residues Ser-820, Ser-1896, and Ser-2944 each carry the O-(pantetheine 4'-phosphoryl)serine modification. Residues 1014-1937 (HHIILDGWSL…QAEHIQAAAL (924 aa)) are domain 2 (cysteine-activating). The segment at 2079-2985 (HHSCFDGWSW…FVDNVLSGLA (907 aa)) is domain 3 (valine-activating). Ser-3502 acts as the For thioesterase activity in catalysis.

It belongs to the ATP-dependent AMP-binding enzyme family. Requires pantetheine 4'-phosphate as cofactor.

It carries out the reaction L-2-aminoadipate + L-valine + L-cysteine + 3 ATP + H2O = N-[(5S)-5-amino-5-carboxypentanoyl]-L-cysteinyl-D-valine + 3 AMP + 3 diphosphate + 3 H(+). It participates in antibiotic biosynthesis; penicillin G biosynthesis; penicillin G from L-alpha-aminoadipate and L-cysteine and L-valine: step 1/3. Each of the constituent amino acids of the tripeptide acv are activated as aminoacyl-adenylates with peptide bonds formed through the participation of amino acid thioester intermediates. The polypeptide is N-(5-amino-5-carboxypentanoyl)-L-cysteinyl-D-valine synthase (pcbAB) (Amycolatopsis lactamdurans (Nocardia lactamdurans)).